Here is a 249-residue protein sequence, read N- to C-terminus: MRMVCMSDVNDELDGSPILEEVLGDALGKLKVFHVKLAAEGEPRGLIGPRDVGIIWERHILNSAAIVPFIREATAKRQFKTVADIGSGGGFPGIVAAACLPDHQFTLVEPMERRIEWLHECVDEMGLDNVSIVRSRANAVIEAVRGSNGGRKGRGEDAVDLDGNPIPVRHPFAVVTCRAVAPMTKLSGWTLPLLDKGGRLVALKGRSAQEEIVKATKEISKNGGIHPRVVEAEVGPGLEPTHVLMVDER.

S-adenosyl-L-methionine-binding residues include Gly-86, Phe-91, and Arg-178.

It belongs to the methyltransferase superfamily. RNA methyltransferase RsmG family.

It localises to the cytoplasm. In terms of biological role, specifically methylates the N7 position of a guanine in 16S rRNA. The polypeptide is Ribosomal RNA small subunit methyltransferase G (Bifidobacterium adolescentis (strain ATCC 15703 / DSM 20083 / NCTC 11814 / E194a)).